Reading from the N-terminus, the 88-residue chain is Small ribosomal subunit protein bS20 (88 aa).

Belongs to the bacterial ribosomal protein bS20 family.

Binds directly to 16S ribosomal RNA. The sequence is that of Small ribosomal subunit protein bS20 from Blochmanniella floridana.